Consider the following 195-residue polypeptide: Auxin-responsive protein IAA14 (195 aa).

Disordered regions lie at residues 1-61 (MAAE…SPAS) and 85-107 (STAAAAKGKGGGETDQGRKNKGG). The short motif at 10-14 (LRLGL) is the EAR-like (transcriptional repression) element. Residues 108-191 (GLYVKVSMDG…SCKKLRIMRG (84 aa)) enclose the PB1 domain.

Belongs to the Aux/IAA family. Homodimers and heterodimers. As to expression, highly expressed in flowers. Expressed in etiolated seedlings.

It is found in the nucleus. Functionally, aux/IAA proteins are short-lived transcriptional factors that function as repressors of early auxin response genes at low auxin concentrations. This is Auxin-responsive protein IAA14 (IAA14) from Oryza sativa subsp. japonica (Rice).